A 213-amino-acid polypeptide reads, in one-letter code: Probable germin-like protein subfamily 2 member 5 (213 aa).

An N-terminal signal peptide occupies residues 1 to 22 (MASFATHLVVVVTMLFVAMASA). Cys29 and Cys44 form a disulfide bridge. Positions 58-203 (KGLANIAATN…SFQLKHKQVK (146 aa)) constitute a Cupin type-1 domain. Residue Asn67 is glycosylated (N-linked (GlcNAc...) asparagine). Mn(2+) is bound by residues His106, His108, Glu113, and His152.

This sequence belongs to the germin family. Oligomer (believed to be a pentamer but probably hexamer).

It localises to the secreted. The protein resides in the extracellular space. It is found in the apoplast. Its function is as follows. May play a role in plant defense. Probably has no oxalate oxidase activity even if the active site is conserved. The chain is Probable germin-like protein subfamily 2 member 5 from Arabidopsis thaliana (Mouse-ear cress).